The primary structure comprises 289 residues: Pteridine reductase 1 (289 aa).

Residue 14–41 (GAAKRLGSSIAEALHAEGYTVCLHYHRS) coordinates NADP(+). A substrate-binding site is contributed by S176. Y195 functions as the Proton acceptor in the catalytic mechanism. An NADP(+)-binding site is contributed by 195–199 (YTMAK).

This sequence belongs to the short-chain dehydrogenases/reductases (SDR) family. In terms of assembly, homotetramer.

It carries out the reaction (6R)-L-erythro-5,6,7,8-tetrahydrobiopterin + 2 NADP(+) = L-erythro-biopterin + 2 NADPH + 2 H(+). It participates in cofactor biosynthesis; tetrahydrobiopterin biosynthesis; tetrahydrobiopterin from biopterin: step 1/1. Exhibits a NADPH-dependent biopterin reductase activity. Has good activity with folate and significant activity with dihydrofolate and dihydrobiopterin, but not with quinonoid dihydrobiopterin. Confers resistance to methotrexate (MTX). The protein is Pteridine reductase 1 (PTR1) of Leishmania tarentolae (Sauroleishmania tarentolae).